We begin with the raw amino-acid sequence, 122 residues long: MIQQESRLRVADNSGARELLVIRVLGGSVRRFAGIGDIVVATVKEAIPGGNVKEGDIVKAVIVRAKKETRRPDGSYIAFDENAAVILKGDNEPRGTRIFGPVARELRDKRFMKIVSLAPEVI.

It belongs to the universal ribosomal protein uL14 family. Part of the 50S ribosomal subunit. Forms a cluster with proteins L3 and L19. In the 70S ribosome, L14 and L19 interact and together make contacts with the 16S rRNA in bridges B5 and B8.

Binds to 23S rRNA. Forms part of two intersubunit bridges in the 70S ribosome. The protein is Large ribosomal subunit protein uL14 of Corynebacterium aurimucosum (strain ATCC 700975 / DSM 44827 / CIP 107346 / CN-1) (Corynebacterium nigricans).